Reading from the N-terminus, the 211-residue chain is MRTGPLFDPSFRDGLDALFQWRRDVRHFRKDPIDEETVARLLACADLAPSVGNSQPWRFVRVDDGARRGVIIDDFTRCNAAARALQPEERQDAYARLKLEGLREAPLQLAVFCDEATDQGHGLGQATMPETRRYSVVMAIHTLWLAARARGLGVGWVSVLDPQTVTAALDVPAEWAFVAYLCIGWPREEHPIPELERLGWQSRRPHPVVRR.

Residues 22–26 (RRDVR), serine 50, leucine 99, and serine 158 each bind FMN.

It belongs to the BluB family. In terms of assembly, homooctamer.

The enzyme catalyses FMNH2 + O2 = dialurate + 5,6-dimethylbenzimidazole + D-erythrose 4-phosphate + H(+). Involved in the biosynthesis of cobalamin (vitamin B12). Catalyzes the oxidative fragmentation and contraction of the isoalloxazine heterocycle and the cleavage of the ribityl tail of FMNH(2) to form 5,6-dimethylbenzimidazole (DMB) and D-erythrose 4-phosphate (E4P). NAD(P)H is only required initially to reduce FMN and oxygen drives the oxidative fragmentation. This is 5,6-dimethylbenzimidazole synthase from Rhodospirillum rubrum (strain ATCC 11170 / ATH 1.1.1 / DSM 467 / LMG 4362 / NCIMB 8255 / S1).